Consider the following 257-residue polypeptide: Enolase-phosphatase E1 (257 aa).

Mg(2+)-binding residues include D16 and E18. Substrate-binding positions include 150-151 (SS) and K184. D209 lines the Mg(2+) pocket.

It belongs to the HAD-like hydrolase superfamily. MasA/MtnC family. In terms of assembly, monomer. Mg(2+) is required as a cofactor.

Its subcellular location is the cytoplasm. It localises to the nucleus. It carries out the reaction 5-methylsulfanyl-2,3-dioxopentyl phosphate + H2O = 1,2-dihydroxy-5-(methylsulfanyl)pent-1-en-3-one + phosphate. Its pathway is amino-acid biosynthesis; L-methionine biosynthesis via salvage pathway; L-methionine from S-methyl-5-thio-alpha-D-ribose 1-phosphate: step 3/6. It functions in the pathway amino-acid biosynthesis; L-methionine biosynthesis via salvage pathway; L-methionine from S-methyl-5-thio-alpha-D-ribose 1-phosphate: step 4/6. In terms of biological role, bifunctional enzyme that catalyzes the enolization of 2,3-diketo-5-methylthiopentyl-1-phosphate (DK-MTP-1-P) into the intermediate 2-hydroxy-3-keto-5-methylthiopentenyl-1-phosphate (HK-MTPenyl-1-P), which is then dephosphorylated to form the acireductone 1,2-dihydroxy-3-keto-5-methylthiopentene (DHK-MTPene). The protein is Enolase-phosphatase E1 (Enoph1) of Mus musculus (Mouse).